The sequence spans 290 residues: uncharacterized protein (290 aa).

The next 5 helical transmembrane spans lie at 14–34, 82–102, 115–135, 158–174, and 176–196; these read ALLN…IGIL, ISSL…LIGG, NLIA…IYLY, DAFV…SSQL, and LPWV…KTAW.

It belongs to the cation diffusion facilitator (CDF) transporter (TC 2.A.4) family.

The protein resides in the cell membrane. This is an uncharacterized protein from Bacillus subtilis (strain 168).